Here is a 603-residue protein sequence, read N- to C-terminus: Isovalerate--CoA ligase AAE2 (603 aa).

This sequence belongs to the ATP-dependent AMP-binding enzyme family. Expressed at low levels in leaves, flowers and developing seeds.

The catalysed reaction is 3-methylbutanoate + ATP + CoA = 3-methylbutanoyl-CoA + AMP + diphosphate. The enzyme catalyses hexanoate + ATP + CoA = hexanoyl-CoA + AMP + diphosphate. It carries out the reaction butanoate + ATP + CoA = butanoyl-CoA + AMP + diphosphate. It catalyses the reaction pentanoate + ATP + CoA = pentanoyl-CoA + AMP + diphosphate. The catalysed reaction is 3-methylpentanoate + ATP + CoA = 3-methylpentanoyl-CoA + AMP + diphosphate. The enzyme catalyses 4-methylpentanoate + ATP + CoA = 4-methylpentanoyl-CoA + AMP + diphosphate. Catalyzes the ligation of CoA on isovalerate to produce 3-methylbutanoyl-CoA. Can also use butanoate, pentanoate, hexanoate, 3-methylpentanoate and 4-methylpentanoate as substrates with a lower efficiency. The protein is Isovalerate--CoA ligase AAE2 of Arabidopsis thaliana (Mouse-ear cress).